The primary structure comprises 209 residues: Pyridoxine/pyridoxamine 5'-phosphate oxidase (209 aa).

Substrate contacts are provided by residues 7 to 10 (REDY) and K64. Residues 59–64 (RIVLLK), 74–75 (FT), R80, and K81 contribute to the FMN site. 3 residues coordinate substrate: Y121, R125, and S129. FMN is bound by residues 138–139 (QS) and W182. A substrate-binding site is contributed by 188-190 (RLH). R192 contacts FMN.

Belongs to the pyridoxamine 5'-phosphate oxidase family. As to quaternary structure, homodimer. Requires FMN as cofactor.

The catalysed reaction is pyridoxamine 5'-phosphate + O2 + H2O = pyridoxal 5'-phosphate + H2O2 + NH4(+). The enzyme catalyses pyridoxine 5'-phosphate + O2 = pyridoxal 5'-phosphate + H2O2. It functions in the pathway cofactor metabolism; pyridoxal 5'-phosphate salvage; pyridoxal 5'-phosphate from pyridoxamine 5'-phosphate: step 1/1. It participates in cofactor metabolism; pyridoxal 5'-phosphate salvage; pyridoxal 5'-phosphate from pyridoxine 5'-phosphate: step 1/1. Its function is as follows. Catalyzes the oxidation of either pyridoxine 5'-phosphate (PNP) or pyridoxamine 5'-phosphate (PMP) into pyridoxal 5'-phosphate (PLP). The chain is Pyridoxine/pyridoxamine 5'-phosphate oxidase from Actinobacillus pleuropneumoniae serotype 5b (strain L20).